A 248-amino-acid chain; its full sequence is Ubiquinone/menaquinone biosynthesis C-methyltransferase UbiE (248 aa).

Residues Ser68 and Asp92 each contribute to the S-adenosyl-L-methionine site.

The protein belongs to the class I-like SAM-binding methyltransferase superfamily. MenG/UbiE family.

The enzyme catalyses a 2-demethylmenaquinol + S-adenosyl-L-methionine = a menaquinol + S-adenosyl-L-homocysteine + H(+). It catalyses the reaction a 2-methoxy-6-(all-trans-polyprenyl)benzene-1,4-diol + S-adenosyl-L-methionine = a 5-methoxy-2-methyl-3-(all-trans-polyprenyl)benzene-1,4-diol + S-adenosyl-L-homocysteine + H(+). The protein operates within quinol/quinone metabolism; menaquinone biosynthesis; menaquinol from 1,4-dihydroxy-2-naphthoate: step 2/2. Its pathway is cofactor biosynthesis; ubiquinone biosynthesis. Methyltransferase required for the conversion of demethylmenaquinol (DMKH2) to menaquinol (MKH2) and the conversion of 2-polyprenyl-6-methoxy-1,4-benzoquinol (DDMQH2) to 2-polyprenyl-3-methyl-6-methoxy-1,4-benzoquinol (DMQH2). This chain is Ubiquinone/menaquinone biosynthesis C-methyltransferase UbiE, found in Rickettsia africae (strain ESF-5).